Here is a 130-residue protein sequence, read N- to C-terminus: Phosphoribosyl-AMP cyclohydrolase (130 aa).

D78 contacts Mg(2+). A Zn(2+)-binding site is contributed by C79. Mg(2+) contacts are provided by D80 and D82. Zn(2+) is bound by residues C96 and C103.

It belongs to the PRA-CH family. In terms of assembly, homodimer. Mg(2+) is required as a cofactor. The cofactor is Zn(2+).

It is found in the cytoplasm. The enzyme catalyses 1-(5-phospho-beta-D-ribosyl)-5'-AMP + H2O = 1-(5-phospho-beta-D-ribosyl)-5-[(5-phospho-beta-D-ribosylamino)methylideneamino]imidazole-4-carboxamide. The protein operates within amino-acid biosynthesis; L-histidine biosynthesis; L-histidine from 5-phospho-alpha-D-ribose 1-diphosphate: step 3/9. Its function is as follows. Catalyzes the hydrolysis of the adenine ring of phosphoribosyl-AMP. The polypeptide is Phosphoribosyl-AMP cyclohydrolase (Methylobacillus flagellatus (strain ATCC 51484 / DSM 6875 / VKM B-1610 / KT)).